The sequence spans 245 residues: MKVEDYFHDILRERKIHLTLIDPEEQTPEEAVEIARAAIRGGTDGIMLGGSTTDSSELDNTARALRENIDVPIILFPGNTTGVSRYADAIFFMSLLNSTNPYWIIGAQALGAATVKKMGIEALPMGYLVVEPGGTVGWVGDTKPVPRNKPDIAAAYAMAAEFLGMRLFYLEAGSGAPEHVPEEMIALVKRCTDQILIVGGGIRSGEDAARVAGAGADVVVTGTVVENSDNVEDKIREIVEGMGSV.

Positions 22 and 51 each coordinate Mg(2+). Sn-glycerol 1-phosphate is bound by residues tyrosine 169–glycine 175, glycine 200–glycine 201, and glycine 222–threonine 223.

This sequence belongs to the GGGP/HepGP synthase family. Group II subfamily. As to quaternary structure, homotetramer. Homohexamer. It depends on Mg(2+) as a cofactor.

The protein resides in the cytoplasm. The enzyme catalyses sn-glycerol 1-phosphate + (2E,6E,10E)-geranylgeranyl diphosphate = sn-3-O-(geranylgeranyl)glycerol 1-phosphate + diphosphate. It participates in membrane lipid metabolism; glycerophospholipid metabolism. Prenyltransferase that catalyzes the transfer of the geranylgeranyl moiety of geranylgeranyl diphosphate (GGPP) to the C3 hydroxyl of sn-glycerol-1-phosphate (G1P). This reaction is the first ether-bond-formation step in the biosynthesis of archaeal membrane lipids. The sequence is that of Geranylgeranylglyceryl phosphate synthase from Methanothermobacter thermautotrophicus (strain ATCC 29096 / DSM 1053 / JCM 10044 / NBRC 100330 / Delta H) (Methanobacterium thermoautotrophicum).